The sequence spans 208 residues: Probable acyl-homoserine-lactone synthase (208 aa).

This sequence belongs to the autoinducer synthase family.

The enzyme catalyses a fatty acyl-[ACP] + S-adenosyl-L-methionine = an N-acyl-L-homoserine lactone + S-methyl-5'-thioadenosine + holo-[ACP] + H(+). Its function is as follows. Required for the synthesis of OHHL (N-(3-oxooctanoyl)-L-homoserine lactone), an autoinducer molecule which binds to TraR and thus acts in the control of conjugal transfer. The sequence is that of Probable acyl-homoserine-lactone synthase (traI) from Sinorhizobium fredii (strain NBRC 101917 / NGR234).